The primary structure comprises 301 residues: Probable alpha-L-glutamate ligase (301 aa).

In terms of domain architecture, ATP-grasp spans 104 to 287 (LQLLSRKGIG…VAGLIYEFIE (184 aa)). ATP contacts are provided by residues lysine 141, 178-179 (EF), aspartate 187, and 211-213 (RSN). Mg(2+) contacts are provided by aspartate 248, glutamate 260, and asparagine 262. Mn(2+) contacts are provided by aspartate 248, glutamate 260, and asparagine 262.

The protein belongs to the RimK family. Mg(2+) is required as a cofactor. The cofactor is Mn(2+).

In Shewanella loihica (strain ATCC BAA-1088 / PV-4), this protein is Probable alpha-L-glutamate ligase.